The following is a 127-amino-acid chain: Large ribosomal subunit protein bL19 (127 aa).

The protein belongs to the bacterial ribosomal protein bL19 family.

In terms of biological role, this protein is located at the 30S-50S ribosomal subunit interface and may play a role in the structure and function of the aminoacyl-tRNA binding site. This chain is Large ribosomal subunit protein bL19, found in Roseobacter denitrificans (strain ATCC 33942 / OCh 114) (Erythrobacter sp. (strain OCh 114)).